Consider the following 136-residue polypeptide: MMHTTSYRRLSPPHLTDQPSAYSHTHRTFSHFSCGSQPAAQRLHVELWNADLQSEFLCPCLGLTLYLTCNPQLGKRKFCSHSSEDMSKMVSRRNVKDSHEVSGSLQATLQVISFSFPFLLHTCSHPLSHPTSGQRR.

Residues 1–22 (MMHTTSYRRLSPPHLTDQPSAY) are disordered.

In terms of tissue distribution, testis specific. Expressed in cancer cell lines.

The protein is Cancer/testis antigen 62 (CT62) of Homo sapiens (Human).